Consider the following 403-residue polypeptide: Zinc finger HIT domain-containing protein 2 (403 aa).

Methionine 1 bears the N-acetylmethionine mark. Positions 7, 10, 22, 25, 30, 34, 38, and 41 each coordinate Zn(2+). The segment at 7–41 (CGFCPAGEVQPARYTCPRCNAPYCSLRCYRTHGTC) adopts an HIT-type zinc-finger fold. Positions 72–98 (RQQRETEDEPGEAGLSSGPAPGGLSGL) are disordered. A Phosphothreonine modification is found at threonine 161.

In terms of assembly, interacts (via HIT-type zinc finger) with RUVBL2 in the presence of ATP or ADP; shows a stronger interaction in the presence of ADP. As to expression, low expression in most tissues; highly expressed in testis.

In terms of biological role, may act as a bridging factor mediating the interaction between the R2TP/Prefoldin-like (R2TP/PFDL) complex and U5 small nuclear ribonucleoprotein (U5 snRNP). Required for the interaction of R2TP complex subunit RPAP3 and prefoldin-like subunit URI1 with U5 snRNP proteins EFTUD2 and PRPF8. May play a role in regulating the composition of the U5 snRNP complex. In Homo sapiens (Human), this protein is Zinc finger HIT domain-containing protein 2 (ZNHIT2).